The primary structure comprises 603 residues: Sulfite reductase [NADPH] flavoprotein alpha-component (603 aa).

The 139-residue stretch at 64 to 202 folds into the Flavodoxin-like domain; that stretch reads ITLISASQTG…QAETWRAAIV (139 aa). FMN-binding positions include 70–75, 117–120, and 153–162; these read SQTGNA, STQG, and LGDSSYEHFA. Positions 236–452 constitute an FAD-binding FR-type domain; that stretch reads EAPLTAHLAL…IEHNDNFRLP (217 aa). Residues threonine 326, leucine 360, 390–393, 408–410, tyrosine 414, and 423–426 each bind FAD; these read RLYS, TVG, and GGAS. NADP(+)-binding positions include 523–524, 529–533, and aspartate 565; these read SR and KIYVQ. Tyrosine 603 contacts FAD.

Belongs to the NADPH-dependent sulphite reductase flavoprotein subunit CysJ family. The protein in the N-terminal section; belongs to the flavodoxin family. This sequence in the C-terminal section; belongs to the flavoprotein pyridine nucleotide cytochrome reductase family. As to quaternary structure, alpha(8)-beta(8). The alpha component is a flavoprotein, the beta component is a hemoprotein. The cofactor is FAD. FMN is required as a cofactor.

It carries out the reaction hydrogen sulfide + 3 NADP(+) + 3 H2O = sulfite + 3 NADPH + 4 H(+). It participates in sulfur metabolism; hydrogen sulfide biosynthesis; hydrogen sulfide from sulfite (NADPH route): step 1/1. Its function is as follows. Component of the sulfite reductase complex that catalyzes the 6-electron reduction of sulfite to sulfide. This is one of several activities required for the biosynthesis of L-cysteine from sulfate. The flavoprotein component catalyzes the electron flow from NADPH -&gt; FAD -&gt; FMN to the hemoprotein component. The polypeptide is Sulfite reductase [NADPH] flavoprotein alpha-component (Sodalis glossinidius (strain morsitans)).